A 160-amino-acid chain; its full sequence is RNA pyrophosphohydrolase (160 aa).

A Nudix hydrolase domain is found at 10–154 (PYRKCVGVVL…KRDVYEQVFD (145 aa)). The short motif at 44–65 (GGIEDGEDARTAALRELVEETG) is the Nudix box element.

It belongs to the Nudix hydrolase family. RppH subfamily. Requires a divalent metal cation as cofactor.

In terms of biological role, accelerates the degradation of transcripts by removing pyrophosphate from the 5'-end of triphosphorylated RNA, leading to a more labile monophosphorylated state that can stimulate subsequent ribonuclease cleavage. In Dinoroseobacter shibae (strain DSM 16493 / NCIMB 14021 / DFL 12), this protein is RNA pyrophosphohydrolase.